The primary structure comprises 217 residues: MGQKINPIGLRVGIIRDWEAKWYAEKDFASLLHEDLRIRKFIDNELKEASVSHVEIERAANRINIAIHTGKPGMVIGKGGSEIEKLRNKLNNLTDKKVHINVIEIKKIDIDARLVAENIARQLENRASFRRVQKQAISRAMKLGAKGIKTQVSGRLGGADIARAEQYSEGTVPLHTLRADIDYAHAEADTTYGKLGVKVWIYRGEVLPTKNTSEGGK.

The region spanning 38–106 is the KH type-2 domain; sequence IRKFIDNELK…KVHINVIEIK (69 aa).

The protein belongs to the universal ribosomal protein uS3 family. In terms of assembly, part of the 30S ribosomal subunit. Forms a tight complex with proteins S10 and S14.

Binds the lower part of the 30S subunit head. Binds mRNA in the 70S ribosome, positioning it for translation. This is Small ribosomal subunit protein uS3 from Staphylococcus haemolyticus (strain JCSC1435).